Consider the following 249-residue polypeptide: 3-deoxy-D-manno-octulosonic acid kinase (249 aa).

Residue D175 is part of the active site.

It belongs to the protein kinase superfamily. KdkA/RfaP family.

The protein resides in the cell inner membrane. It catalyses the reaction an alpha-Kdo-(2-&gt;6)-lipid IVA + ATP = a 4-O-phospho-alpha-Kdo-(2-&gt;6)-lipid IVA + ADP + H(+). The protein operates within bacterial outer membrane biogenesis; LPS core biosynthesis. Its function is as follows. Catalyzes the ATP-dependent phosphorylation of the 3-deoxy-D-manno-octulosonic acid (Kdo) residue in Kdo-lipid IV(A) at the 4-OH position. The polypeptide is 3-deoxy-D-manno-octulosonic acid kinase (Xylella fastidiosa (strain M12)).